We begin with the raw amino-acid sequence, 182 residues long: Putative CTD phosphatase-like protein 355R (182 aa).

One can recognise an FCP1 homology domain in the interval 1–180 (MKNIFLDLDN…MRLKDVLNRH (180 aa)).

This sequence belongs to the IIV-6 355R family.

In terms of biological role, may function as a phosphatase. The protein is Putative CTD phosphatase-like protein 355R of Invertebrate iridescent virus 6 (IIV-6).